The following is a 249-amino-acid chain: Uridylate kinase (249 aa).

Lysine 22–glycine 25 serves as a coordination point for ATP. The tract at residues glycine 30–glycine 35 is involved in allosteric activation by GTP. Residue glycine 64 coordinates UMP. 2 residues coordinate ATP: glycine 65 and arginine 69. UMP contacts are provided by residues aspartate 84 and threonine 145–threonine 152. Residues asparagine 173, tyrosine 179, and aspartate 182 each coordinate ATP.

It belongs to the UMP kinase family. In terms of assembly, homohexamer.

The protein localises to the cytoplasm. It catalyses the reaction UMP + ATP = UDP + ADP. It participates in pyrimidine metabolism; CTP biosynthesis via de novo pathway; UDP from UMP (UMPK route): step 1/1. Allosterically activated by GTP. Inhibited by UTP. In terms of biological role, catalyzes the reversible phosphorylation of UMP to UDP. In Ruegeria sp. (strain TM1040) (Silicibacter sp.), this protein is Uridylate kinase.